A 94-amino-acid chain; its full sequence is Co-chaperonin GroES (94 aa).

The protein belongs to the GroES chaperonin family. As to quaternary structure, heptamer of 7 subunits arranged in a ring. Interacts with the chaperonin GroEL.

It is found in the cytoplasm. Together with the chaperonin GroEL, plays an essential role in assisting protein folding. The GroEL-GroES system forms a nano-cage that allows encapsulation of the non-native substrate proteins and provides a physical environment optimized to promote and accelerate protein folding. GroES binds to the apical surface of the GroEL ring, thereby capping the opening of the GroEL channel. The chain is Co-chaperonin GroES from Geobacillus thermodenitrificans (strain NG80-2).